The sequence spans 869 residues: Ubiquitin carboxyl-terminal hydrolase 29 (869 aa).

Polar residues-rich tracts occupy residues 104–120 (SSTPCESQQPMEPMSSQ) and 140–150 (SLNTTPESGTP). Residues 104 to 226 (SSTPCESQQP…KAVTLREQEK (123 aa)) form a disordered region. Over residues 187-200 (VNKDIPKENTPDQK) the composition is skewed to basic and acidic residues. Positions 201-212 (KKSRRYYSRNRG) are enriched in basic residues. Over residues 213–226 (GKAEKAVTLREQEK) the composition is skewed to basic and acidic residues. The USP domain occupies 289-826 (EGFPNLGNTC…SGYIFFYMHN (538 aa)). The active-site Nucleophile is the cysteine 298. The tract at residues 723 to 754 (SQEDPEKDLSRSPELQEDDPHSFAFGSDDSKD) is disordered. Catalysis depends on histidine 781, which acts as the Proton acceptor.

This sequence belongs to the peptidase C19 family. In terms of tissue distribution, predominantly expressed in brain and testis. Highest expression levels in adult brain, especially in the cerebral cortex and hippocampus, and in the forebrain, face, and limb buds of midgestation mouse embryos.

The protein localises to the cytoplasm. It localises to the perinuclear region. It catalyses the reaction Thiol-dependent hydrolysis of ester, thioester, amide, peptide and isopeptide bonds formed by the C-terminal Gly of ubiquitin (a 76-residue protein attached to proteins as an intracellular targeting signal).. Functionally, deubiquitinase involved in innate antiviral immunity by mediating 'Lys-48'-linked deubiquitination of CGAS, thereby promoting its stabilization. The chain is Ubiquitin carboxyl-terminal hydrolase 29 from Mus musculus (Mouse).